We begin with the raw amino-acid sequence, 98 residues long: Large ribosomal subunit protein uL23 (98 aa).

This sequence belongs to the universal ribosomal protein uL23 family. In terms of assembly, part of the 50S ribosomal subunit. Contacts protein L29, and trigger factor when it is bound to the ribosome.

Its function is as follows. One of the early assembly proteins it binds 23S rRNA. One of the proteins that surrounds the polypeptide exit tunnel on the outside of the ribosome. Forms the main docking site for trigger factor binding to the ribosome. This is Large ribosomal subunit protein uL23 from Cereibacter sphaeroides (strain ATCC 17025 / ATH 2.4.3) (Rhodobacter sphaeroides).